A 368-amino-acid chain; its full sequence is Agmatine deiminase (368 aa).

Cysteine 357 (amidino-cysteine intermediate) is an active-site residue.

Belongs to the agmatine deiminase family. As to quaternary structure, homodimer.

The catalysed reaction is agmatine + H2O = N-carbamoylputrescine + NH4(+). It participates in amine and polyamine biosynthesis; putrescine biosynthesis via agmatine pathway; N-carbamoylputrescine from agmatine: step 1/1. Functionally, mediates the hydrolysis of agmatine into N-carbamoylputrescine in the arginine decarboxylase (ADC) pathway of putrescine biosynthesis, a basic polyamine. The chain is Agmatine deiminase from Pseudomonas fluorescens (strain ATCC BAA-477 / NRRL B-23932 / Pf-5).